The chain runs to 225 residues: Uracil-DNA glycosylase (225 aa).

Asp-65 acts as the Proton acceptor in catalysis.

The protein belongs to the uracil-DNA glycosylase (UDG) superfamily. UNG family.

The protein localises to the cytoplasm. The enzyme catalyses Hydrolyzes single-stranded DNA or mismatched double-stranded DNA and polynucleotides, releasing free uracil.. Excises uracil residues from the DNA which can arise as a result of misincorporation of dUMP residues by DNA polymerase or due to deamination of cytosine. This Bacillus cereus (strain ATCC 10987 / NRS 248) protein is Uracil-DNA glycosylase.